The chain runs to 62 residues: MSDKKLVNVTLVKSTIGRLPAHKACVAGLGLRKMHQTVAVIDTPENRGMINKVSYLLKVEEA.

It belongs to the universal ribosomal protein uL30 family. Part of the 50S ribosomal subunit.

The polypeptide is Large ribosomal subunit protein uL30 (Hydrogenovibrio crunogenus (strain DSM 25203 / XCL-2) (Thiomicrospira crunogena)).